The following is a 406-amino-acid chain: MNKLFVGSEIGQLRRVILHRPERALSHLTPTNCHNLLFDDVLSVEKALLEHDQFVKTLENQGVDVLLLQDLLEQTLENPEAKEWLLKHQISHYRFGPTFANQIRSFLLEHSNKELASILLGGLAFIELPFKAPSMLQQLSDPFDFVIDPLPNHLFTRDTSCWIYGGVSINPMAKAARKRESNHLRAIYRWHPLFSNQDFARYFEDENRYYDNATIEGGDVLVIGKGNVLVGISERTTPQGIENLAKQLFRTHQAKQVIAIKLPEDRSCMHLDTVMTHMDHNVFSVYPRVIDKNMGCWSITPCGEQHLDIKEMPNFQNVLMSALELDNLNIITTGGDSYEAEREQWHDANNVLTIKPGVVVAYERNTYTNEKYDKAGIHVLPITGDELGRGRGGARCMSCPIERDGI.

Cysteine 396 functions as the Amidino-cysteine intermediate in the catalytic mechanism.

It belongs to the arginine deiminase family.

The protein resides in the cytoplasm. The catalysed reaction is L-arginine + H2O = L-citrulline + NH4(+). It functions in the pathway amino-acid degradation; L-arginine degradation via ADI pathway; carbamoyl phosphate from L-arginine: step 1/2. This Aliivibrio fischeri (strain MJ11) (Vibrio fischeri) protein is Arginine deiminase.